A 300-amino-acid polypeptide reads, in one-letter code: MSEHHSGFVAIIGRPNVGKSTFMNRILGEKIAIMSPKAQTTRNKINGIYTTPDAQIVFVDTPGIHKPKNELDTYMDKAALSTLNQVDAILFMVEADEEKGPGDGYIMRQLAEVKKPVYLIINKIDLVKPDDLLPLIESYQHDYAFAQVFPISATMENNVDELLTALTDALPVGPQYYPEDQLTDHPEYFVVGELIREKILELTRDEVPHAVAVQVERMKDREGGKLQIEAYIIVERDSQKGIIIGRGGQMLKQIGIRARRDIENLLGDKVNLKLWVRVQKNWRDNNAYLKSLGYNTKDLR.

Residues 5-172 enclose the Era-type G domain; the sequence is HSGFVAIIGR…LTALTDALPV (168 aa). The G1 stretch occupies residues 13-20; that stretch reads GRPNVGKS. 13–20 lines the GTP pocket; the sequence is GRPNVGKS. The interval 39 to 43 is G2; the sequence is QTTRN. The interval 60–63 is G3; sequence DTPG. GTP is bound by residues 60–64 and 122–125; these read DTPGI and NKID. The segment at 122–125 is G4; sequence NKID. A G5 region spans residues 151–153; it reads ISA. Residues 203-280 enclose the KH type-2 domain; that stretch reads TRDEVPHAVA…NLKLWVRVQK (78 aa).

The protein belongs to the TRAFAC class TrmE-Era-EngA-EngB-Septin-like GTPase superfamily. Era GTPase family. As to quaternary structure, monomer.

Its subcellular location is the cytoplasm. The protein localises to the cell membrane. An essential GTPase that binds both GDP and GTP, with rapid nucleotide exchange. Plays a role in 16S rRNA processing and 30S ribosomal subunit biogenesis and possibly also in cell cycle regulation and energy metabolism. In Lacticaseibacillus paracasei (strain ATCC 334 / BCRC 17002 / CCUG 31169 / CIP 107868 / KCTC 3260 / NRRL B-441) (Lactobacillus paracasei), this protein is GTPase Era.